Consider the following 523-residue polypeptide: Synaptotagmin-10 (523 aa).

Over 1–55 (MSFHKEDGVNSLCQKALHIVTELCFAGQVEWEKCSGIFPRDRGSQGGSSTDISVS) the chain is Vesicular. The tract at residues 13–35 (CQKALHIVTELCFAGQVEWEKCS) is cysteine motif. The helical transmembrane segment at 56–76 (LLAVVVSFCGLALLVVSLFVF) threads the bilayer. Residues 77-523 (WKLCWPCWKS…CPSPKPPSTP (447 aa)) are Cytoplasmic-facing. Thr-136 carries the post-translational modification Phosphothreonine. C2 domains are found at residues 231 to 352 (ICGK…TVWK) and 363 to 496 (DLGE…THWH). Ca(2+) contacts are provided by Asp-262, Asp-268, Asp-320, Phe-321, Asp-322, Ser-325, Asp-328, Asp-394, Asp-400, Asp-454, and Asp-456.

The protein belongs to the synaptotagmin family. As to quaternary structure, homodimer; disulfide-linked via the cysteine motif. Can also form heterodimers with SYT3, SYT6, SYT7 and SYT9. Ca(2+) is required as a cofactor.

The protein localises to the cytoplasmic vesicle. It localises to the secretory vesicle membrane. Its function is as follows. Ca(2+) sensor specifically required for the Ca(2+)-dependent exocytosis of secretory vesicles containing IGF1 in neurons of the olfactory bulb. Exocytosis of IGF1 is required for sensory perception of smell. Not involved in Ca(2+)-dependent synaptic vesicle exocytosis. Acts through Ca(2+) and phospholipid binding to the C2 domain: Ca(2+) induces binding of the C2-domains to phospholipid membranes and to assembled SNARE-complexes; both actions contribute to triggering exocytosis. The protein is Synaptotagmin-10 (SYT10) of Pongo abelii (Sumatran orangutan).